The following is a 402-amino-acid chain: MSVDIRPTPPAQDSARQNVTLQIVSVVMFTFIGYLTIGIPLAVLPGYVHDDLGYGSVLAGLVISLQYLATLLARPYAGRVIDGLGPKRAVLYGMAGSAASGLFMLLSVAIQGWPALSLASLLVGRLVLGAAESLVGSAAIGWGIGRVGAPHTAKVISWNGIASYGAIALGAPLGVLLVQWLGLWSMGASIVLLGALGFALAWPKLPAPLVHGERLPFHHVLGRVTPHGMGLALGAIGFGTIATFITLYYASRGWANAVLCLSAFGGCFIGARLLFANSINRLGGFRVAIICLGVESLGLLLLWSAPNPWVGLAGAALTGFGFSLVFPAFGVEAVNLVPASNRGAALGAYSLFVDLSLGITGPLVGFVANLFGFRSMFLFACLASLSGLALAIALHRRSRRPG.

12 consecutive transmembrane segments (helical) span residues I23–V43, L52–L72, V90–I110, L121–G141, W158–V178, W180–L200, G228–Y248, A255–F275, L282–L302, W309–F329, L351–F371, and S375–H395.

The protein belongs to the major facilitator superfamily. YhhS family.

The protein localises to the cell inner membrane. This is an uncharacterized protein from Pseudomonas aeruginosa (strain UCBPP-PA14).